Here is a 144-residue protein sequence, read N- to C-terminus: Ribonuclease VapC45 (144 aa).

Residues Asp-7 and Asp-102 each contribute to the Mg(2+) site.

Belongs to the PINc/VapC protein family. Mg(2+) serves as cofactor.

In terms of biological role, toxic component of a type II toxin-antitoxin (TA) system. An RNase. Its cognate antitoxin is VapB45. The sequence is that of Ribonuclease VapC45 from Mycobacterium tuberculosis (strain CDC 1551 / Oshkosh).